The following is a 286-amino-acid chain: Urease accessory protein UreD 2 (286 aa).

The protein belongs to the UreD family. As to quaternary structure, ureD, UreF and UreG form a complex that acts as a GTP-hydrolysis-dependent molecular chaperone, activating the urease apoprotein by helping to assemble the nickel containing metallocenter of UreC. The UreE protein probably delivers the nickel.

It localises to the cytoplasm. Functionally, required for maturation of urease via the functional incorporation of the urease nickel metallocenter. This Bradyrhizobium sp. (strain ORS 278) protein is Urease accessory protein UreD 2.